The sequence spans 277 residues: MSQGYLNFPHIDPVLIEIGPLAVRWYGLMYLFGFMFALWLANKRADKPNSGWTRDQVSDLLFAGFLGVVIGGRVGYVLFYNFGYFLDNPLYLFEVWTGGMSFHGGLLGVISAMLWYGYKNNRSFFTIADFVAPLVPFGLGAGRLGNFMNGELWGRVTDVPWAMVFPTGGPFPRHPSQLYEFALEGVVLFLILNWFIRKPRPLGTVSGLFLFGYGTFRFLVEYVRQPDAQLGLFGDWISMGQILSLPMVIGGLLMMLWAFKRNLYPSIEQPQSTTKKK.

Helical transmembrane passes span 21 to 41 (LAVRWYGLMYLFGFMFALWLA), 60 to 80 (LLFAGFLGVVIGGRVGYVLFY), 95 to 115 (VWTGGMSFHGGLLGVISAMLW), 124 to 144 (FFTIADFVAPLVPFGLGAGRL), 176 to 196 (SQLYEFALEGVVLFLILNWFI), 203 to 223 (GTVSGLFLFGYGTFRFLVEYV), and 239 to 259 (MGQILSLPMVIGGLLMMLWAF). Arg-143 contributes to the a 1,2-diacyl-sn-glycero-3-phospho-(1'-sn-glycerol) binding site.

Belongs to the Lgt family.

The protein resides in the cell inner membrane. The enzyme catalyses L-cysteinyl-[prolipoprotein] + a 1,2-diacyl-sn-glycero-3-phospho-(1'-sn-glycerol) = an S-1,2-diacyl-sn-glyceryl-L-cysteinyl-[prolipoprotein] + sn-glycerol 1-phosphate + H(+). Its pathway is protein modification; lipoprotein biosynthesis (diacylglyceryl transfer). In terms of biological role, catalyzes the transfer of the diacylglyceryl group from phosphatidylglycerol to the sulfhydryl group of the N-terminal cysteine of a prolipoprotein, the first step in the formation of mature lipoproteins. This is Phosphatidylglycerol--prolipoprotein diacylglyceryl transferase from Aliivibrio fischeri (strain ATCC 700601 / ES114) (Vibrio fischeri).